A 147-amino-acid polypeptide reads, in one-letter code: Leech anti-platelet protein (147 aa).

Residues 1–21 (MNSFLFSLACSLLVAIPAISA) form the signal peptide. The tract at residues 21–71 (AQDEDAGGAGDETSEGEDTTGSDETPSTGGGGDGGNEETITAGNEDCWSKR) is disordered. The segment covering 22 to 41 (QDEDAGGAGDETSEGEDTTG) has biased composition (acidic residues). Cystine bridges form between Cys67-Cys145, Cys92-Cys117, and Cys96-Cys105.

The N-terminus is blocked. Expressed by salivary glands.

The protein resides in the secreted. Functionally, inhibits collagen-stimulated platelet aggregation (IC(50)=60 nM), dense granule release and serotonin release. Does not inhibit platelet aggregation induced by ADP, arachidonic acid, and thrombin. This is Leech anti-platelet protein from Haementeria officinalis (Mexican leech).